Consider the following 162-residue polypeptide: Lymphocyte antigen 86 (162 aa).

Positions 1-19 (MNGVAAALLVWILTSPSSS) are cleaved as a signal peptide. 3 cysteine pairs are disulfide-bonded: Cys-33-Cys-58, Cys-45-Cys-154, and Cys-102-Cys-112. Residue Asn-96 is glycosylated (N-linked (GlcNAc...) asparagine). The N-linked (GlcNAc...) asparagine glycan is linked to Asn-156.

In terms of assembly, M-shaped tetramer of two CD180-LY86 heterodimers. As to expression, highly expressed in spleen, liver, brain and thymus, and at lower levels in kidney.

It is found in the secreted. Its subcellular location is the extracellular space. In terms of biological role, may cooperate with CD180 and TLR4 to mediate the innate immune response to bacterial lipopolysaccharide (LPS) and cytokine production. Important for efficient CD180 cell surface expression. This is Lymphocyte antigen 86 (Ly86) from Mus musculus (Mouse).